Consider the following 270-residue polypeptide: Endonuclease 4 (270 aa).

Residues His69, His108, Glu139, Asp169, His172, His204, Asp217, His219, and Glu248 each coordinate Zn(2+).

The protein belongs to the AP endonuclease 2 family. Zn(2+) is required as a cofactor.

The enzyme catalyses Endonucleolytic cleavage to 5'-phosphooligonucleotide end-products.. Functionally, endonuclease IV plays a role in DNA repair. It cleaves phosphodiester bonds at apurinic or apyrimidinic (AP) sites, generating a 3'-hydroxyl group and a 5'-terminal sugar phosphate. In addition, possesses a 3'-5' exonuclease activity. The protein is Endonuclease 4 of Thermus thermophilus (strain ATCC BAA-163 / DSM 7039 / HB27).